The sequence spans 111 residues: Inner membrane protein H108R (111 aa).

The helical transmembrane segment at 10 to 32 (LIVIITILITTRELSTTMLIVSL) threads the bilayer. An N-linked (GlcNAc...) asparagine; by host glycan is attached at Asn65.

Belongs to the asfivirus H108R family.

It localises to the virion membrane. In African swine fever virus (isolate Tick/Malawi/Lil 20-1/1983) (ASFV), this protein is Inner membrane protein H108R.